The following is a 266-amino-acid chain: Tryptophan synthase alpha chain (266 aa).

Catalysis depends on proton acceptor residues Glu52 and Asp63.

The protein belongs to the TrpA family. Tetramer of two alpha and two beta chains.

The enzyme catalyses (1S,2R)-1-C-(indol-3-yl)glycerol 3-phosphate + L-serine = D-glyceraldehyde 3-phosphate + L-tryptophan + H2O. The protein operates within amino-acid biosynthesis; L-tryptophan biosynthesis; L-tryptophan from chorismate: step 5/5. Functionally, the alpha subunit is responsible for the aldol cleavage of indoleglycerol phosphate to indole and glyceraldehyde 3-phosphate. This chain is Tryptophan synthase alpha chain, found in Nocardia farcinica (strain IFM 10152).